Reading from the N-terminus, the 266-residue chain is Putative pyruvate, phosphate dikinase regulatory protein (266 aa).

147 to 154 (GLSRTSKT) provides a ligand contact to ADP.

Belongs to the pyruvate, phosphate/water dikinase regulatory protein family. PDRP subfamily.

The enzyme catalyses N(tele)-phospho-L-histidyl/L-threonyl-[pyruvate, phosphate dikinase] + ADP = N(tele)-phospho-L-histidyl/O-phospho-L-threonyl-[pyruvate, phosphate dikinase] + AMP + H(+). It carries out the reaction N(tele)-phospho-L-histidyl/O-phospho-L-threonyl-[pyruvate, phosphate dikinase] + phosphate + H(+) = N(tele)-phospho-L-histidyl/L-threonyl-[pyruvate, phosphate dikinase] + diphosphate. Its function is as follows. Bifunctional serine/threonine kinase and phosphorylase involved in the regulation of the pyruvate, phosphate dikinase (PPDK) by catalyzing its phosphorylation/dephosphorylation. In Clostridium perfringens (strain 13 / Type A), this protein is Putative pyruvate, phosphate dikinase regulatory protein.